Here is a 570-residue protein sequence, read N- to C-terminus: Putative periplasmic trehalase (570 aa).

Residues 1-34 (MIPPEIRRSVLLQKAIKLALAGTLLTFASFSATA) form the signal peptide. Substrate is bound by residues Arg-159, 166–167 (WD), Asn-203, 212–214 (RSQ), 284–286 (RPE), and Gly-317. Residues Asp-319 and Glu-503 each act as proton donor/acceptor in the active site. Position 518 (Glu-518) interacts with substrate. Residues 544 to 570 (KPCDSVPSTRPASLSATPTKTPSAATQ) are disordered. Over residues 554–570 (PASLSATPTKTPSAATQ) the composition is skewed to low complexity.

This sequence belongs to the glycosyl hydrolase 37 family. In terms of assembly, monomer.

It localises to the periplasm. It catalyses the reaction alpha,alpha-trehalose + H2O = alpha-D-glucose + beta-D-glucose. Functionally, provides the cells with the ability to utilize trehalose at high osmolarity by splitting it into glucose molecules that can subsequently be taken up by the phosphotransferase-mediated uptake system. This Salmonella typhi protein is Putative periplasmic trehalase.